Here is a 308-residue protein sequence, read N- to C-terminus: MASSNTVLMRLVASAYSIAQKAGMIVRRVIAEGDLGIVEKTCATDLQTKADRLAQMSICSSLARKFPKLTIIGEEDLPSEEVDQELIEDSQWEEILKQPCPSQYSAIKEEDLVVWVDPLDGTKEYTEGLLDNVTVLIGIAYEGKAIAGVINQPYYNYEAGPDAVLGRTIWGVLGLGAFGFQLKEVPAGKHIITTTRSHSNKLVTDCVAAMNPDAVLRVGGAGNKIIQLIEGKASAYVFASPGCKKWDTCAPEVILHAVGGKLTDIHGNVLQYHKDVKHMNSAGVLATLRNYDYYASRVPESIKNALVP.

Ala-2 carries the N-acetylalanine modification. The Proton acceptor role is filled by Asp-51. Positions 74, 117, 119, and 120 each coordinate Mg(2+). Residue Thr-122 is the Proton acceptor of the active site. Thr-122 bears the Phosphothreonine mark. Positions 195, 198, 220, and 224 each coordinate AMP. Ser-240 carries the post-translational modification Phosphoserine. The residue at position 244 (Lys-244) is an N6-succinyllysine. Mg(2+) is bound at residue Asp-247.

The protein belongs to the inositol monophosphatase superfamily. Requires Mg(2+) as cofactor. As to expression, highly expressed in kidney, liver, pancreas and heart. Detected at lower levels in brain, placenta, lung and skeletal muscle.

It catalyses the reaction adenosine 3',5'-bisphosphate + H2O = AMP + phosphate. The enzyme catalyses adenosine 2',5'-bisphosphate + H2O = AMP + phosphate. It carries out the reaction 3'-phosphoadenylyl sulfate + H2O = adenosine 5'-phosphosulfate + phosphate. The catalysed reaction is 1D-myo-inositol 1,4-bisphosphate + H2O = 1D-myo-inositol 4-phosphate + phosphate. It catalyses the reaction 1D-myo-inositol 1,3,4-trisphosphate + H2O = 1D-myo-inositol 3,4-bisphosphate + phosphate. Is very sensitive to inhibition by Li(+) (IC(50)=0.3 mM for hydrolysis of PAP; IC(50)=0.6 mM for hydrolysis of inositol-1,4-bis-phosphate). Is not affected by high Na(+) concentrations. Its function is as follows. Phosphatase that converts 3'(2')-phosphoadenosine 5'-phosphate (PAP) to AMP and inositol 1,4-bisphosphate (Ins(1,4)P2) to inositol 4-phosphate. Is also able to hydrolyze adenosine 3'-phosphate 5'-phosphosulfate (PAPS) to adenosine 5'-phosphosulfate (APS). Probably prevents the toxic accumulation of PAP, a compound which inhibits a variety of proteins, including PAPS-utilizing enzymes such as sulfotransferases, and RNA processing enzymes. Could also play a role in inositol recycling and phosphoinositide metabolism. Is not active on 3'-AMP, inositol-1-phosphate and inositol-1,4,5-triphosphate. This chain is 3'(2'),5'-bisphosphate nucleotidase 1 (BPNT1), found in Homo sapiens (Human).